The primary structure comprises 282 residues: Putative hydrolase Bcep18194_B0137 (282 aa).

Positions 124, 126, and 155 each coordinate Mg(2+).

The protein belongs to the FAH family. Mg(2+) is required as a cofactor.

The protein is Putative hydrolase Bcep18194_B0137 of Burkholderia lata (strain ATCC 17760 / DSM 23089 / LMG 22485 / NCIMB 9086 / R18194 / 383).